Here is a 314-residue protein sequence, read N- to C-terminus: Serine/threonine-protein phosphatase PP-Y (314 aa).

Mn(2+) contacts are provided by D60, H62, D88, and N120. H121 functions as the Proton donor in the catalytic mechanism. H169 and H244 together coordinate Mn(2+).

The protein belongs to the PPP phosphatase family. PP-Y subfamily. It depends on Mn(2+) as a cofactor.

It catalyses the reaction O-phospho-L-seryl-[protein] + H2O = L-seryl-[protein] + phosphate. The catalysed reaction is O-phospho-L-threonyl-[protein] + H2O = L-threonyl-[protein] + phosphate. The sequence is that of Serine/threonine-protein phosphatase PP-Y (PpY-55A) from Drosophila melanogaster (Fruit fly).